The chain runs to 389 residues: Major outer membrane porin (389 aa).

The N-terminal stretch at 1 to 22 (MKKLLKSALLFAATGSALSLQA) is a signal peptide.

This sequence belongs to the chlamydial porin (CP) (TC 1.B.2) family. Part of a disulfide cross-linked outer membrane complex (COMC) composed of the major outer membrane porin (MOMP), the small cysteine-rich protein (OmcA) and the large cysteine-rich periplasmic protein (OmcB).

The protein resides in the cell outer membrane. In terms of biological role, in elementary bodies (EBs, the infectious stage, which is able to survive outside the host cell) provides the structural integrity of the outer envelope through disulfide cross-links with the small cysteine-rich protein and the large cysteine-rich periplasmic protein. It has been described in publications as the Sarkosyl-insoluble COMC (Chlamydia outer membrane complex), and serves as the functional equivalent of peptidoglycan. Its function is as follows. Permits diffusion of specific solutes through the outer membrane. The chain is Major outer membrane porin (ompA) from Chlamydia abortus (strain DSM 27085 / S26/3) (Chlamydophila abortus).